The primary structure comprises 231 residues: 7-cyano-7-deazaguanine synthase (231 aa).

8–18 lines the ATP pocket; it reads FSGGQDSTTCL. Residues C188, C197, C200, and C203 each coordinate Zn(2+).

This sequence belongs to the QueC family. The cofactor is Zn(2+).

The catalysed reaction is 7-carboxy-7-deazaguanine + NH4(+) + ATP = 7-cyano-7-deazaguanine + ADP + phosphate + H2O + H(+). Its pathway is purine metabolism; 7-cyano-7-deazaguanine biosynthesis. Its function is as follows. Catalyzes the ATP-dependent conversion of 7-carboxy-7-deazaguanine (CDG) to 7-cyano-7-deazaguanine (preQ(0)). This chain is 7-cyano-7-deazaguanine synthase, found in Enterobacter sp. (strain 638).